We begin with the raw amino-acid sequence, 338 residues long: Lipoyl synthase (338 aa).

The disordered stretch occupies residues M1 to K24. 7 residues coordinate [4Fe-4S] cluster: C84, C89, C95, C110, C114, C117, and S324. In terms of domain architecture, Radical SAM core spans F96–K313.

It belongs to the radical SAM superfamily. Lipoyl synthase family. It depends on [4Fe-4S] cluster as a cofactor.

The protein localises to the cytoplasm. It carries out the reaction [[Fe-S] cluster scaffold protein carrying a second [4Fe-4S](2+) cluster] + N(6)-octanoyl-L-lysyl-[protein] + 2 oxidized [2Fe-2S]-[ferredoxin] + 2 S-adenosyl-L-methionine + 4 H(+) = [[Fe-S] cluster scaffold protein] + N(6)-[(R)-dihydrolipoyl]-L-lysyl-[protein] + 4 Fe(3+) + 2 hydrogen sulfide + 2 5'-deoxyadenosine + 2 L-methionine + 2 reduced [2Fe-2S]-[ferredoxin]. Its pathway is protein modification; protein lipoylation via endogenous pathway; protein N(6)-(lipoyl)lysine from octanoyl-[acyl-carrier-protein]: step 2/2. Functionally, catalyzes the radical-mediated insertion of two sulfur atoms into the C-6 and C-8 positions of the octanoyl moiety bound to the lipoyl domains of lipoate-dependent enzymes, thereby converting the octanoylated domains into lipoylated derivatives. The protein is Lipoyl synthase of Pseudomonas putida (strain W619).